We begin with the raw amino-acid sequence, 90 residues long: Small ribosomal subunit protein uS15c (90 aa).

This sequence belongs to the universal ribosomal protein uS15 family. Part of the 30S ribosomal subunit.

Its subcellular location is the plastid. It is found in the chloroplast. This chain is Small ribosomal subunit protein uS15c (rps15), found in Glycine max (Soybean).